Consider the following 397-residue polypeptide: Putative odorant receptor 83c (397 aa).

Residues 1–39 (MSTSESPSSRFRELSKYINSLTNLLGVDFLSPKLKFNYR) lie on the Cytoplasmic side of the membrane. The chain crosses the membrane as a helical span at residues 40 to 60 (TWTTIFAIANYTGFTVFTILN). The Extracellular segment spans residues 61-70 (NGGDWRVGLK). A helical membrane pass occupies residues 71 to 90 (ASLMTGGLFHGLGKFLTCLL). The Cytoplasmic portion of the chain corresponds to 91–136 (KHQDMRRLVLYSQSIYDEYETRGDSYHRTLNSNIDRLLGIMKIIRN). A helical transmembrane segment spans residues 137–157 (GYVFAFCLMELLPLAMLMYDG). Residues 158 to 186 (TRVTAMQYLIPGLPLENNYCYVVTYMIQT) lie on the Extracellular side of the membrane. Residues 187 to 207 (VTMLVQGVGFYSGDLFVFLGL) traverse the membrane as a helical segment. Residues 208–282 (TQILTFADML…ALYYELIATQ (75 aa)) lie on the Cytoplasmic side of the membrane. Residues 283–299 (VLSMALAMMLSFCINLS) form a helical membrane-spanning segment. Residues 300 to 305 (SFHMPS) are Extracellular-facing. The helical transmembrane segment at 306-326 (AIFFVVSAYSMSIYCILGTIL) threads the bilayer. At 327–365 (EFAYDQVYESICNVTWYELSGEQRKLFGFLLRESQYPHN) the chain is on the cytoplasmic side. A helical transmembrane segment spans residues 366–386 (IQILGVMSLSVRTALQIVKLI). Residues 387–397 (YSVSMMMMNRA) are Extracellular-facing.

The protein belongs to the insect chemoreceptor superfamily. Heteromeric odorant receptor channel (TC 1.A.69) family. Or67d subfamily. Interacts with Orco. Complexes exist early in the endomembrane system in olfactory sensory neurons (OSNs), coupling these complexes to the conserved ciliary trafficking pathway. Expressed in olfactory sensory neurons in the antenna.

It is found in the cell membrane. Functionally, odorant receptor which mediates acceptance or avoidance behavior, depending on its substrates. The odorant receptor repertoire encodes a large collection of odor stimuli that vary widely in identity, intensity, and duration. May form a complex with Orco to form odorant-sensing units, providing sensitive and prolonged odorant signaling and calcium permeability. The polypeptide is Putative odorant receptor 83c (Or83c) (Drosophila melanogaster (Fruit fly)).